Consider the following 304-residue polypeptide: Acetyl-coenzyme A carboxylase carboxyl transferase subunit beta (304 aa).

A CoA carboxyltransferase N-terminal domain is found at V23 to V292. Residues C27, C30, C46, and C49 each coordinate Zn(2+). The C4-type zinc finger occupies C27–C49. The interval N284–A304 is disordered. Over residues P295 to A304 the composition is skewed to pro residues.

It belongs to the AccD/PCCB family. As to quaternary structure, acetyl-CoA carboxylase is a heterohexamer composed of biotin carboxyl carrier protein (AccB), biotin carboxylase (AccC) and two subunits each of ACCase subunit alpha (AccA) and ACCase subunit beta (AccD). Zn(2+) serves as cofactor.

Its subcellular location is the cytoplasm. The enzyme catalyses N(6)-carboxybiotinyl-L-lysyl-[protein] + acetyl-CoA = N(6)-biotinyl-L-lysyl-[protein] + malonyl-CoA. Its pathway is lipid metabolism; malonyl-CoA biosynthesis; malonyl-CoA from acetyl-CoA: step 1/1. Its function is as follows. Component of the acetyl coenzyme A carboxylase (ACC) complex. Biotin carboxylase (BC) catalyzes the carboxylation of biotin on its carrier protein (BCCP) and then the CO(2) group is transferred by the transcarboxylase to acetyl-CoA to form malonyl-CoA. The polypeptide is Acetyl-coenzyme A carboxylase carboxyl transferase subunit beta (Escherichia coli O139:H28 (strain E24377A / ETEC)).